Consider the following 260-residue polypeptide: MPNLLEKTRKITSILQRSVDSLDAELPYNAMASRLADIIDCNACIINGGGTLLGYAMKYKTNNDRVEEFFEAKQFPDSYVKAASRVYDTEANLPVENELTIFPIESKNTYPDGLTTIAPIYGGGMRLGSLIIWRNDKKFLDEDLILVEISSTVVGIQLLNLQTENLEETIRKQTAVNMAINTLSYSEMKAVAAILGELDGNEGRLTASVIADRIGITRSVIVNALRKLESAGIIESRSLGMKGTYLKVINEGIFDKLKEF.

Residues 1–159 (MPNLLEKTRK…SSTVVGIQLL (159 aa)) form a GAF domain region. A DNA-binding region (H-T-H motif) is located at residues 207–226 (ASVIADRIGITRSVIVNALR).

The protein belongs to the CodY family.

It localises to the cytoplasm. Its function is as follows. DNA-binding global transcriptional regulator which is involved in the adaptive response to starvation and acts by directly or indirectly controlling the expression of numerous genes in response to nutrient availability. During rapid exponential growth, CodY is highly active and represses genes whose products allow adaptation to nutrient depletion. The polypeptide is Global transcriptional regulator CodY (Streptococcus uberis (strain ATCC BAA-854 / 0140J)).